Here is a 198-residue protein sequence, read N- to C-terminus: MAYPGHPGAGGGYYPGGYGGAPGGPAFPGQTQDPLYGYFAAVAGQDGQIDADELQRCLTQSGIAGGYKPFNLETCRLMVSMLDRDMSGTMGFNEFKELWAVLNGWRQHFISFDSDRSGTVDPQELQKALTTMGFRLSPQTVNSVAKRYSTSGKITFDDYIACCVKLRALTDSFRRRDSGQQGVVNFSYDDFIQCVMTV.

EF-hand domains lie at 45-64 (QDGQIDADELQRCLTQSGIA), 70-98 (FNLETCRLMVSMLDRDMSGTMGFNEFKEL), 100-135 (AVLNGWRQHFISFDSDRSGTVDPQELQKALTTMGFR), and 151-169 (SGKITFDDYIACCVKLRAL). The Ca(2+) site is built by aspartate 83, aspartate 85, serine 87, threonine 89, glutamate 94, aspartate 113, aspartate 115, serine 117, threonine 119, and glutamate 124. At serine 178 the chain carries Phosphoserine.

As to quaternary structure, homodimer. Interacts with GCA, RYR2 and ANXA7. In terms of tissue distribution, detected in cardiac myocytes.

It is found in the cytoplasm. The protein resides in the sarcoplasmic reticulum membrane. In terms of biological role, calcium-binding protein that modulates excitation-contraction coupling in the heart. Contributes to calcium homeostasis in the heart sarcoplasmic reticulum. Modulates the activity of RYR2 calcium channels. The protein is Sorcin (Sri) of Mus musculus (Mouse).